A 259-amino-acid polypeptide reads, in one-letter code: Global transcriptional regulator CodY (259 aa).

The segment at 1-155 (MNLLAKTRKL…GATVVGMEIL (155 aa)) is GAF domain. The segment at residues 203–222 (ASKIADRVGITRSVIVNALR) is a DNA-binding region (H-T-H motif).

It belongs to the CodY family.

It is found in the cytoplasm. Its function is as follows. DNA-binding global transcriptional regulator which is involved in the adaptive response to starvation and acts by directly or indirectly controlling the expression of numerous genes in response to nutrient availability. During rapid exponential growth, CodY is highly active and represses genes whose products allow adaptation to nutrient depletion. This Exiguobacterium sibiricum (strain DSM 17290 / CCUG 55495 / CIP 109462 / JCM 13490 / 255-15) protein is Global transcriptional regulator CodY.